The following is a 457-amino-acid chain: ATP-dependent RNA helicase DbpA (457 aa).

Residues 3–31 (AFSTLNVLPPAQLTNLNELGYLTMTPVQA) carry the Q motif motif. The Helicase ATP-binding domain maps to 34 to 205 (LPAILAGKDV…GRVQRDPLAI (172 aa)). 47 to 54 (AKTGSGKT) lines the ATP pocket. A DEAD box motif is present at residues 153–156 (DEAD). In terms of domain architecture, Helicase C-terminal spans 230–376 (PLLQRLLSLH…QTPPANSSIA (147 aa)). An involved in 23S rRNA binding region spans residues 383 to 457 (ATLCIDGGKK…GKTCRVRLLK (75 aa)).

It belongs to the DEAD box helicase family. DbpA subfamily. As to quaternary structure, monomer.

It is found in the cytoplasm. It catalyses the reaction ATP + H2O = ADP + phosphate + H(+). Requires hairpin 92 of 23S rRNA for optimal activity. ATPase activity is stimulated by interaction of the N-terminal domain with RNA. Functionally, DEAD-box RNA helicase involved in the assembly of the 50S ribosomal subunit. Has an RNA-dependent ATPase activity, which is specific for 23S rRNA, and a 3' to 5' RNA helicase activity that uses the energy of ATP hydrolysis to destabilize and unwind short rRNA duplexes. Requires a single-stranded RNA loading site on the 3' side of the substrate helix. The polypeptide is ATP-dependent RNA helicase DbpA (Escherichia coli (strain K12)).